The primary structure comprises 550 residues: Chaperonin GroEL (550 aa).

ATP-binding positions include 30-33 (TLGP), Lys51, 87-91 (DGTTT), Gly415, 479-481 (NAA), and Asp495.

It belongs to the chaperonin (HSP60) family. Forms a cylinder of 14 subunits composed of two heptameric rings stacked back-to-back. Interacts with the co-chaperonin GroES.

Its subcellular location is the cytoplasm. It catalyses the reaction ATP + H2O + a folded polypeptide = ADP + phosphate + an unfolded polypeptide.. Its function is as follows. Together with its co-chaperonin GroES, plays an essential role in assisting protein folding. The GroEL-GroES system forms a nano-cage that allows encapsulation of the non-native substrate proteins and provides a physical environment optimized to promote and accelerate protein folding. This chain is Chaperonin GroEL, found in Polaromonas sp. (strain JS666 / ATCC BAA-500).